Consider the following 341-residue polypeptide: Cyanuric acid amidohydrolase (341 aa).

The tract at residues 1–90 (MAPIEILKFP…HVTFFLRSPG (90 aa)) is RU A. Substrate contacts are provided by residues Arg51 and 71–72 (SG). The interval 95 to 229 (GLSAAVGHTR…CHILVLASTS (135 aa)) is RU B. The active site involves Lys144. Residues Arg176 and 212 to 213 (SS) contribute to the substrate site. The active-site Nucleophile is Ser212. Residues 235–341 (LHAVSRPMAD…SLCLVYETSI (107 aa)) form an RU C region. Residue Glu273 participates in Mg(2+) binding. Residues Arg300 and 319–320 (SG) each bind substrate. Residues Ala322, Gln325, Gly326, Pro327, and Gly330 each contribute to the Mg(2+) site.

The protein belongs to the cyclic amide hydrolase (CyAH) family. Homotetramer.

The enzyme catalyses cyanurate + H2O = 1-carboxybiuret + H(+). The protein operates within xenobiotic degradation; atrazine degradation; biuret from cyanurate: step 1/1. Its activity is regulated as follows. Inhibited by barbituric acid. In terms of biological role, responsible for the hydrolysis of cyanuric acid, an intermediate formed during catabolism of s-triazine based compounds in herbicides such as atrazine and polymers such as melamine. Catalyzes the hydrolytic opening of the s-triazine ring of cyanuric acid (2,4,6-trihydroxy-s-triazine) to yield carbon dioxide and carboxybiuret, which spontaneously decarboxylates to biuret. Only active on cyanuric acid and N-methylisocyanuric acid. In Sarocladium sp, this protein is Cyanuric acid amidohydrolase.